Reading from the N-terminus, the 469-residue chain is Glutamate--tRNA ligase (469 aa).

The short motif at proline 11–asparagine 21 is the 'HIGH' region element. Positions lysine 243–arginine 247 match the 'KMSKS' region motif. Lysine 246 serves as a coordination point for ATP.

The protein belongs to the class-I aminoacyl-tRNA synthetase family. Glutamate--tRNA ligase type 1 subfamily. In terms of assembly, monomer.

It is found in the cytoplasm. The catalysed reaction is tRNA(Glu) + L-glutamate + ATP = L-glutamyl-tRNA(Glu) + AMP + diphosphate. In terms of biological role, catalyzes the attachment of glutamate to tRNA(Glu) in a two-step reaction: glutamate is first activated by ATP to form Glu-AMP and then transferred to the acceptor end of tRNA(Glu). The sequence is that of Glutamate--tRNA ligase from Burkholderia cenocepacia (strain ATCC BAA-245 / DSM 16553 / LMG 16656 / NCTC 13227 / J2315 / CF5610) (Burkholderia cepacia (strain J2315)).